We begin with the raw amino-acid sequence, 159 residues long: Probable cyclic pyranopterin monophosphate synthase (159 aa).

Substrate contacts are provided by residues 74–76 and 110–111; these read MCH and ME. Residue Asp-125 is part of the active site.

Belongs to the MoaC family. As to quaternary structure, homohexamer; trimer of dimers.

It catalyses the reaction (8S)-3',8-cyclo-7,8-dihydroguanosine 5'-triphosphate = cyclic pyranopterin phosphate + diphosphate. It functions in the pathway cofactor biosynthesis; molybdopterin biosynthesis. Functionally, catalyzes the conversion of (8S)-3',8-cyclo-7,8-dihydroguanosine 5'-triphosphate to cyclic pyranopterin monophosphate (cPMP). This chain is Probable cyclic pyranopterin monophosphate synthase, found in Methanococcoides burtonii (strain DSM 6242 / NBRC 107633 / OCM 468 / ACE-M).